Reading from the N-terminus, the 280-residue chain is Phosphonates import ATP-binding protein PhnC 1 (280 aa).

The region spanning 3–247 (FRLDAASVSY…LLRELYASES (245 aa)) is the ABC transporter domain. Residue 36–43 (GPSGAGKT) participates in ATP binding.

Belongs to the ABC transporter superfamily. Phosphonates importer (TC 3.A.1.9.1) family. As to quaternary structure, the complex is composed of two ATP-binding proteins (PhnC), two transmembrane proteins (PhnE) and a solute-binding protein (PhnD).

It localises to the cell inner membrane. The enzyme catalyses phosphonate(out) + ATP + H2O = phosphonate(in) + ADP + phosphate + H(+). In terms of biological role, part of the ABC transporter complex PhnCDE involved in phosphonates import. Responsible for energy coupling to the transport system. The sequence is that of Phosphonates import ATP-binding protein PhnC 1 from Cupriavidus necator (strain ATCC 17699 / DSM 428 / KCTC 22496 / NCIMB 10442 / H16 / Stanier 337) (Ralstonia eutropha).